A 946-amino-acid chain; its full sequence is Aminopeptidase N (946 aa).

A signal peptide spans 1-15; sequence MRLLICLTLLGLVCG. Asparagine 60 carries an N-linked (GlcNAc...) asparagine glycan. 308-312 is a substrate binding site; it reads GAMEN. Histidine 344 serves as a coordination point for Zn(2+). The Proton acceptor role is filled by glutamate 345. Zn(2+) contacts are provided by histidine 348 and glutamate 367. Residues asparagine 550 and asparagine 605 are each glycosylated (N-linked (GlcNAc...) asparagine). 2 disulfides stabilise this stretch: cysteine 715–cysteine 722 and cysteine 751–cysteine 787.

The protein belongs to the peptidase M1 family. The cofactor is Zn(2+).

The protein localises to the cell membrane. It catalyses the reaction Release of an N-terminal amino acid, Xaa-|-Yaa- from a peptide, amide or arylamide. Xaa is preferably Ala, but may be most amino acids including Pro (slow action). When a terminal hydrophobic residue is followed by a prolyl residue, the two may be released as an intact Xaa-Pro dipeptide.. The polypeptide is Aminopeptidase N (APN1) (Plutella xylostella (Diamondback moth)).